Here is a 189-residue protein sequence, read N- to C-terminus: Peptidyl-tRNA hydrolase (189 aa).

Tyr-16 is a binding site for tRNA. Catalysis depends on His-21, which acts as the Proton acceptor. The tRNA site is built by Phe-67, Asn-69, and Asn-115.

Belongs to the PTH family. Monomer.

It is found in the cytoplasm. It catalyses the reaction an N-acyl-L-alpha-aminoacyl-tRNA + H2O = an N-acyl-L-amino acid + a tRNA + H(+). In terms of biological role, hydrolyzes ribosome-free peptidyl-tRNAs (with 1 or more amino acids incorporated), which drop off the ribosome during protein synthesis, or as a result of ribosome stalling. Its function is as follows. Catalyzes the release of premature peptidyl moieties from peptidyl-tRNA molecules trapped in stalled 50S ribosomal subunits, and thus maintains levels of free tRNAs and 50S ribosomes. This Legionella pneumophila subsp. pneumophila (strain Philadelphia 1 / ATCC 33152 / DSM 7513) protein is Peptidyl-tRNA hydrolase.